We begin with the raw amino-acid sequence, 386 residues long: Glucose-1-phosphate adenylyltransferase (386 aa).

Alpha-D-glucose 1-phosphate-binding positions include tyrosine 100, glycine 165, 180–181, and serine 191; that span reads EK.

The protein belongs to the bacterial/plant glucose-1-phosphate adenylyltransferase family. In terms of assembly, homotetramer.

It carries out the reaction alpha-D-glucose 1-phosphate + ATP + H(+) = ADP-alpha-D-glucose + diphosphate. The protein operates within glycan biosynthesis; glycogen biosynthesis. Involved in the biosynthesis of ADP-glucose, a building block required for the elongation reactions to produce glycogen. Catalyzes the reaction between ATP and alpha-D-glucose 1-phosphate (G1P) to produce pyrophosphate and ADP-Glc. This is Glucose-1-phosphate adenylyltransferase from Clostridium botulinum (strain Eklund 17B / Type B).